We begin with the raw amino-acid sequence, 146 residues long: MIWIFFVIALFLVTGLTLYAIRLLKQLKVQKELIAKAKNNRVIRLKESIDIIARAMQSGECNLSEGVMRLTMLLRPFGKNLSSYPAMANLYEVVRDMPTHDDRKLLEKRERMRLDLARESAEAQFEKNIKQELYILLEDIKSIELI.

A helical transmembrane segment spans residues 7–24 (VIALFLVTGLTLYAIRLL).

Its subcellular location is the membrane. This is an uncharacterized protein from Haemophilus influenzae (strain ATCC 51907 / DSM 11121 / KW20 / Rd).